The sequence spans 146 residues: uncharacterized protein (146 aa).

One can recognise a Toprim domain in the interval 31-119 (EKVMIVEGKS…RAYKEVAAAP (89 aa)).

This is an uncharacterized protein from Bacillus subtilis (strain 168).